Consider the following 200-residue polypeptide: 3-isopropylmalate dehydratase small subunit (200 aa).

Belongs to the LeuD family. LeuD type 1 subfamily. As to quaternary structure, heterodimer of LeuC and LeuD.

It catalyses the reaction (2R,3S)-3-isopropylmalate = (2S)-2-isopropylmalate. Its pathway is amino-acid biosynthesis; L-leucine biosynthesis; L-leucine from 3-methyl-2-oxobutanoate: step 2/4. Functionally, catalyzes the isomerization between 2-isopropylmalate and 3-isopropylmalate, via the formation of 2-isopropylmaleate. This is 3-isopropylmalate dehydratase small subunit from Aliivibrio salmonicida (strain LFI1238) (Vibrio salmonicida (strain LFI1238)).